The chain runs to 171 residues: Peptide deformylase (171 aa).

Residues Cys91 and His133 each coordinate Fe cation. The active site involves Glu134. His137 is a binding site for Fe cation.

Belongs to the polypeptide deformylase family. It depends on Fe(2+) as a cofactor.

The catalysed reaction is N-terminal N-formyl-L-methionyl-[peptide] + H2O = N-terminal L-methionyl-[peptide] + formate. Removes the formyl group from the N-terminal Met of newly synthesized proteins. Requires at least a dipeptide for an efficient rate of reaction. N-terminal L-methionine is a prerequisite for activity but the enzyme has broad specificity at other positions. The sequence is that of Peptide deformylase from Mannheimia succiniciproducens (strain KCTC 0769BP / MBEL55E).